The primary structure comprises 360 residues: Photosystem II protein D1 2 (360 aa).

3 helical membrane passes run 29–46, 118–133, and 142–156; these read YIGWFGVLMVPTLLSATI, HFLIGIFAYLGREWEF, and WICVAYSAPVAAATA. Histidine 118 contacts chlorophyll a. Tyrosine 126 serves as a coordination point for pheophytin a. The [CaMn4O5] cluster site is built by aspartate 170 and glutamate 189. Residues 197 to 218 form a helical membrane-spanning segment; sequence LHMFGVAGVFGGSLFAAMHGSL. Histidine 198 contacts chlorophyll a. A quinone is bound by residues histidine 215 and 264-265; that span reads SF. Residue histidine 215 participates in Fe cation binding. Histidine 272 contributes to the Fe cation binding site. A helical transmembrane segment spans residues 274–288; it reads FLAAWPVIGIWLTSL. Residues histidine 332, glutamate 333, aspartate 342, and alanine 344 each coordinate [CaMn4O5] cluster. A propeptide spanning residues 345–360 is cleaved from the precursor; the sequence is GTESAPVAFAAALGDG.

It belongs to the reaction center PufL/M/PsbA/D family. In terms of assembly, PSII is composed of 1 copy each of membrane proteins PsbA, PsbB, PsbC, PsbD, PsbE, PsbF, PsbH, PsbI, PsbJ, PsbK, PsbL, PsbM, PsbT, PsbX, Psb30/Ycf12, peripheral proteins PsbO, CyanoQ (PsbQ), PsbU, PsbV and a large number of cofactors. It forms dimeric complexes. It depends on The D1/D2 heterodimer binds P680, chlorophylls that are the primary electron donor of PSII, and subsequent electron acceptors. It shares a non-heme iron and each subunit binds pheophytin, quinone, additional chlorophylls, carotenoids and lipids. D1 provides most of the ligands for the Mn4-Ca-O5 cluster of the oxygen-evolving complex (OEC). There is also a Cl(-1) ion associated with D1 and D2, which is required for oxygen evolution. The PSII complex binds additional chlorophylls, carotenoids and specific lipids. as a cofactor. In terms of processing, tyr-161 forms a radical intermediate that is referred to as redox-active TyrZ, YZ or Y-Z. C-terminally processed by CtpA; processing is essential to allow assembly of the oxygen-evolving complex and thus photosynthetic growth.

It is found in the cell inner membrane. It catalyses the reaction 2 a plastoquinone + 4 hnu + 2 H2O = 2 a plastoquinol + O2. Functionally, photosystem II (PSII) is a light-driven water:plastoquinone oxidoreductase that uses light energy to abstract electrons from H(2)O, generating O(2) and a proton gradient subsequently used for ATP formation. It consists of a core antenna complex that captures photons, and an electron transfer chain that converts photonic excitation into a charge separation. The D1/D2 (PsbA/PsbD) reaction center heterodimer binds P680, the primary electron donor of PSII as well as several subsequent electron acceptors. The protein is Photosystem II protein D1 2 of Gloeobacter violaceus (strain ATCC 29082 / PCC 7421).